A 187-amino-acid chain; its full sequence is Large ribosomal subunit protein bL9 (187 aa).

Positions 168–187 are disordered; it reads EEAPAEEDVAAEETSEAAEA.

This sequence belongs to the bacterial ribosomal protein bL9 family.

In terms of biological role, binds to the 23S rRNA. The chain is Large ribosomal subunit protein bL9 from Paramagnetospirillum magneticum (strain ATCC 700264 / AMB-1) (Magnetospirillum magneticum).